A 468-amino-acid polypeptide reads, in one-letter code: 6-phosphogluconate dehydrogenase, decarboxylating (468 aa).

NADP(+)-binding positions include 10 to 15, 33 to 35, 74 to 76, and N102; these read GMAVMG, NRS, and VKA. Residues N102 and 128-130 contribute to the substrate site; that span reads SGG. The Proton acceptor role is filled by K183. 186-187 is a substrate binding site; the sequence is HN. The Proton donor role is filled by E190. Residues Y191, K260, R287, R445, and H451 each coordinate substrate.

Belongs to the 6-phosphogluconate dehydrogenase family. In terms of assembly, homodimer.

It carries out the reaction 6-phospho-D-gluconate + NADP(+) = D-ribulose 5-phosphate + CO2 + NADPH. It participates in carbohydrate degradation; pentose phosphate pathway; D-ribulose 5-phosphate from D-glucose 6-phosphate (oxidative stage): step 3/3. In terms of biological role, catalyzes the oxidative decarboxylation of 6-phosphogluconate to ribulose 5-phosphate and CO(2), with concomitant reduction of NADP to NADPH. This Escherichia coli protein is 6-phosphogluconate dehydrogenase, decarboxylating (gnd).